A 447-amino-acid chain; its full sequence is Elongation factor 1-alpha (447 aa).

In terms of domain architecture, tr-type G spans 5-230 (KIHISIVVIG…DQISEPKRPS (226 aa)). The segment at 14-21 (GHVDSGKS) is G1. 14 to 21 (GHVDSGKS) is a GTP binding site. At Lys55 the chain carries N6,N6-dimethyllysine. Residues 70–74 (GITID) form a G2 region. Lys79 carries the N6,N6,N6-trimethyllysine modification. A G3 region spans residues 91–94 (DAPG). GTP is bound by residues 91 to 95 (DAPGH) and 153 to 156 (NKMD). The segment at 153 to 156 (NKMD) is G4. Lys187 carries the N6,N6,N6-trimethyllysine modification. Positions 194 to 196 (SGF) are G5. Residue Lys261 is modified to N6-methyllysine. Glu289 carries the 5-glutamyl glycerylphosphorylethanolamine modification. Position 306 is an N6,N6,N6-trimethyllysine (Lys306). Glu362 bears the 5-glutamyl glycerylphosphorylethanolamine mark. At Lys396 the chain carries N6,N6,N6-trimethyllysine.

This sequence belongs to the TRAFAC class translation factor GTPase superfamily. Classic translation factor GTPase family. EF-Tu/EF-1A subfamily.

The protein localises to the cytoplasm. Functionally, this protein promotes the GTP-dependent binding of aminoacyl-tRNA to the A-site of ribosomes during protein biosynthesis. In Daucus carota (Wild carrot), this protein is Elongation factor 1-alpha.